The following is a 189-amino-acid chain: Acireductone dioxygenase 1 (189 aa).

Residues H102, H104, E108, and H146 each coordinate Fe(2+). Ni(2+) is bound by residues H102, H104, E108, and H146.

The protein belongs to the acireductone dioxygenase (ARD) family. As to quaternary structure, monomer. The cofactor is Fe(2+). Ni(2+) serves as cofactor.

It catalyses the reaction 1,2-dihydroxy-5-(methylsulfanyl)pent-1-en-3-one + O2 = 3-(methylsulfanyl)propanoate + CO + formate + 2 H(+). The catalysed reaction is 1,2-dihydroxy-5-(methylsulfanyl)pent-1-en-3-one + O2 = 4-methylsulfanyl-2-oxobutanoate + formate + 2 H(+). It functions in the pathway amino-acid biosynthesis; L-methionine biosynthesis via salvage pathway; L-methionine from S-methyl-5-thio-alpha-D-ribose 1-phosphate: step 5/6. Catalyzes 2 different reactions between oxygen and the acireductone 1,2-dihydroxy-3-keto-5-methylthiopentene (DHK-MTPene) depending upon the metal bound in the active site. Fe-containing acireductone dioxygenase (Fe-ARD) produces formate and 2-keto-4-methylthiobutyrate (KMTB), the alpha-ketoacid precursor of methionine in the methionine recycle pathway. Ni-containing acireductone dioxygenase (Ni-ARD) produces methylthiopropionate, carbon monoxide and formate, and does not lie on the methionine recycle pathway. This Nocardia farcinica (strain IFM 10152) protein is Acireductone dioxygenase 1.